We begin with the raw amino-acid sequence, 287 residues long: MIKIGAHMPISKGFDRVPQDTVNIGGNSFQIFPHNARSWGAKLPSDEVATKFKREMKKNGIDWENAFCHSGYLINLASPKEDIWQKSVELLKKEVEICRKLGIRYLNIHPGSHLGTGEEEGIDRIVRGLNEVLNNTEGVVILLENVSQKGGNIGYKLEQLKKIRDLVDQKDRVAVTYDTCHGFDSGYDITKKEGVEALLNEIETLFGLERLKMIHLNDSKYPLGAAKDRHERIGSGFIGEEGFAVFFSFKEIQEVPWILETPGGNEEHAEDIKKVFEIIEKFGIEVD.

Zn(2+) is bound by residues histidine 69, histidine 109, glutamate 144, aspartate 178, histidine 181, histidine 215, aspartate 228, histidine 230, and glutamate 260.

Belongs to the AP endonuclease 2 family. The cofactor is Zn(2+).

The catalysed reaction is Endonucleolytic cleavage to 5'-phosphooligonucleotide end-products.. Functionally, endonuclease IV plays a role in DNA repair. It cleaves phosphodiester bonds at apurinic or apyrimidinic (AP) sites, generating a 3'-hydroxyl group and a 5'-terminal sugar phosphate. The chain is Probable endonuclease 4 from Thermotoga sp. (strain RQ2).